The following is a 156-amino-acid chain: Small ribosomal subunit protein uS7 (156 aa).

Belongs to the universal ribosomal protein uS7 family. As to quaternary structure, part of the 30S ribosomal subunit. Contacts proteins S9 and S11.

Functionally, one of the primary rRNA binding proteins, it binds directly to 16S rRNA where it nucleates assembly of the head domain of the 30S subunit. Is located at the subunit interface close to the decoding center, probably blocks exit of the E-site tRNA. In Streptococcus pyogenes serotype M12 (strain MGAS2096), this protein is Small ribosomal subunit protein uS7.